A 620-amino-acid polypeptide reads, in one-letter code: MEGSYLSAQENQPIPERLIPRSNSTSNLFALSSTFSKLNVRNDADYNYSNPNKKRHIYSGEIDCRSVTAARKFPVRSCSMTAAQQRKRTALFTVRERNSYHEGFNNDQDYVSQYQKPQYTFGVYKELTPYQLQRSKMKRSFQFPNGEIYKPKLDGKCTHSLKKPELNSRDSSLFKFSEKKGRNLSKDFVGPHNGTSVIHIPPNDTGYGVNSLELNTSVPSTIKSSVSSTSPISAVNTLTSLPESQTDDDDGYENKTVTISYCFENTVNEKHGSHIEKLDLSTKEKTKPTTNSGLFDRKKKTILGTEKYRCIKSQSKLKLGSVLKKLWRTSGNSNTKHGKKDTKRRRIPIDDMVTHSDGNSEAENDIELMDANLDGIEFDDDETLMDTDSIFDDLLSKENDKYDLRRRQLEIRQKLHETSHNDDGKVSFRDTEKHNVNEGLIDKTIIEEFSKLGEYIIDTRNQPPPRSSKRPSLDDNESARYFYNISTDLRQSLSGPISLPMHVGNDMVNRLRNDWEYIRFEDRRNSLPDSSFDKVETPPKPIKKDVRFAKEVCLASTWSSNAYERANPEFIMNRHRLLWMMKVHPSMNSAMNEIKLELNSYKKNEMVVHENSKCFTHYLI.

A compositionally biased stretch (polar residues) spans 1–12 (MEGSYLSAQENQ). Residues 1-20 (MEGSYLSAQENQPIPERLIP) are disordered. Phosphoserine occurs at positions 472 and 526.

It to yeast YER158C.

Functionally, acts in conjunction with the alpha-factor receptor to promote morphogenesis and adaptation. The polypeptide is Protein AFR1 (AFR1) (Saccharomyces cerevisiae (strain ATCC 204508 / S288c) (Baker's yeast)).